We begin with the raw amino-acid sequence, 464 residues long: Phosphoglucosamine mutase (464 aa).

Ser112 functions as the Phosphoserine intermediate in the catalytic mechanism. The Mg(2+) site is built by Ser112, Asp252, Asp254, and Asp256. Phosphoserine is present on Ser112.

This sequence belongs to the phosphohexose mutase family. Requires Mg(2+) as cofactor. Post-translationally, activated by phosphorylation.

The catalysed reaction is alpha-D-glucosamine 1-phosphate = D-glucosamine 6-phosphate. Catalyzes the conversion of glucosamine-6-phosphate to glucosamine-1-phosphate. The protein is Phosphoglucosamine mutase of Synechococcus sp. (strain CC9902).